A 161-amino-acid polypeptide reads, in one-letter code: Nucleotide-binding protein Mmwyl1_2033 (161 aa).

This sequence belongs to the YajQ family.

Functionally, nucleotide-binding protein. The polypeptide is Nucleotide-binding protein Mmwyl1_2033 (Marinomonas sp. (strain MWYL1)).